Here is a 352-residue protein sequence, read N- to C-terminus: Biotin synthase (352 aa).

A Radical SAM core domain is found at 44–262; that stretch reads NRVQVSTLLS…LAVARILMPQ (219 aa). 3 residues coordinate [4Fe-4S] cluster: C59, C63, and C66. C103, C134, C194, and R266 together coordinate [2Fe-2S] cluster.

This sequence belongs to the radical SAM superfamily. Biotin synthase family. In terms of assembly, homodimer. Requires [4Fe-4S] cluster as cofactor. The cofactor is [2Fe-2S] cluster.

It catalyses the reaction (4R,5S)-dethiobiotin + (sulfur carrier)-SH + 2 reduced [2Fe-2S]-[ferredoxin] + 2 S-adenosyl-L-methionine = (sulfur carrier)-H + biotin + 2 5'-deoxyadenosine + 2 L-methionine + 2 oxidized [2Fe-2S]-[ferredoxin]. Its pathway is cofactor biosynthesis; biotin biosynthesis; biotin from 7,8-diaminononanoate: step 2/2. Functionally, catalyzes the conversion of dethiobiotin (DTB) to biotin by the insertion of a sulfur atom into dethiobiotin via a radical-based mechanism. This is Biotin synthase from Pseudomonas syringae pv. tomato (strain ATCC BAA-871 / DC3000).